The primary structure comprises 325 residues: SAM pointed domain-containing Ets transcription factor (325 aa).

Disordered regions lie at residues 27–50 (GTEK…PPAT) and 79–100 (ARAG…SQAS). Positions 119–203 (EVLKDIETAC…AHLDIWKSAA (85 aa)) constitute a PNT domain. Positions 239–322 (IHLWQFLKEL…ISQRLVYQFV (84 aa)) form a DNA-binding region, ETS.

The protein belongs to the ETS family. Interacts with the DNA-binding domain of the androgen receptor. Interacts with NKX3-1. In terms of tissue distribution, expressed in the accessory glands of sex organs including the prostate, seminal vesicle, coagulating gland in males, the oviduct in females, and in intestines. Expression is epithelial-specific.

Its subcellular location is the nucleus. Its function is as follows. May function as an androgen-independent transactivator of the prostate-specific antigen (PSA) promoter. Binds to 5'-GGAT-3' DNA sequences. May play a role in the regulation of the prostate gland and/or prostate cancer development. Acts as a transcriptional activator for SERPINB5 promoter. This chain is SAM pointed domain-containing Ets transcription factor (Spdef), found in Mus musculus (Mouse).